Reading from the N-terminus, the 365-residue chain is Eukaryotic translation initiation factor 3 subunit H (365 aa).

The region spanning 15 to 166 (ILLDSLVVMK…LRAWRLSTAA (152 aa)) is the MPN domain.

It belongs to the eIF-3 subunit H family. Component of the eukaryotic translation initiation factor 3 (eIF-3) complex.

It is found in the cytoplasm. Functionally, component of the eukaryotic translation initiation factor 3 (eIF-3) complex, which is involved in protein synthesis of a specialized repertoire of mRNAs and, together with other initiation factors, stimulates binding of mRNA and methionyl-tRNAi to the 40S ribosome. The eIF-3 complex specifically targets and initiates translation of a subset of mRNAs involved in cell proliferation. The chain is Eukaryotic translation initiation factor 3 subunit H from Caenorhabditis elegans.